Here is a 278-residue protein sequence, read N- to C-terminus: Phosphatidylglycerol--prolipoprotein diacylglyceryl transferase (278 aa).

4 helical membrane passes run 17-37 (LAVRWYGLMYLLGFSLFILLG), 57-77 (ALFYGVLGVILGGRLGHVLFY), 89-109 (ILAIWQGGMSFHGGFLGVAIA), and 119-139 (LSWLAVTDFIAPLVPLGLGAG). Residue arginine 140 coordinates a 1,2-diacyl-sn-glycero-3-phospho-(1'-sn-glycerol). Helical transmembrane passes span 174-194 (QLYEFALEGLVLFALIWLYSA), 200-220 (GAVTGMFMIGYGAFRSFCEFF), and 233-253 (LGISMGQWLSLPMIAAGIALL).

Belongs to the Lgt family.

It localises to the cell inner membrane. It carries out the reaction L-cysteinyl-[prolipoprotein] + a 1,2-diacyl-sn-glycero-3-phospho-(1'-sn-glycerol) = an S-1,2-diacyl-sn-glyceryl-L-cysteinyl-[prolipoprotein] + sn-glycerol 1-phosphate + H(+). Its pathway is protein modification; lipoprotein biosynthesis (diacylglyceryl transfer). Functionally, catalyzes the transfer of the diacylglyceryl group from phosphatidylglycerol to the sulfhydryl group of the N-terminal cysteine of a prolipoprotein, the first step in the formation of mature lipoproteins. In Nitrosomonas europaea (strain ATCC 19718 / CIP 103999 / KCTC 2705 / NBRC 14298), this protein is Phosphatidylglycerol--prolipoprotein diacylglyceryl transferase.